A 612-amino-acid polypeptide reads, in one-letter code: Dihydroxy-acid dehydratase (612 aa).

Asp81 provides a ligand contact to Mg(2+). [2Fe-2S] cluster is bound at residue Cys122. Mg(2+) is bound by residues Asp123 and Lys124. Residue Lys124 is modified to N6-carboxylysine. Cys193 contacts [2Fe-2S] cluster. Glu489 is a binding site for Mg(2+). Residue Ser515 is the Proton acceptor of the active site.

Belongs to the IlvD/Edd family. In terms of assembly, homodimer. [2Fe-2S] cluster serves as cofactor. Mg(2+) is required as a cofactor.

The enzyme catalyses (2R)-2,3-dihydroxy-3-methylbutanoate = 3-methyl-2-oxobutanoate + H2O. It catalyses the reaction (2R,3R)-2,3-dihydroxy-3-methylpentanoate = (S)-3-methyl-2-oxopentanoate + H2O. It participates in amino-acid biosynthesis; L-isoleucine biosynthesis; L-isoleucine from 2-oxobutanoate: step 3/4. Its pathway is amino-acid biosynthesis; L-valine biosynthesis; L-valine from pyruvate: step 3/4. Functionally, functions in the biosynthesis of branched-chain amino acids. Catalyzes the dehydration of (2R,3R)-2,3-dihydroxy-3-methylpentanoate (2,3-dihydroxy-3-methylvalerate) into 2-oxo-3-methylpentanoate (2-oxo-3-methylvalerate) and of (2R)-2,3-dihydroxy-3-methylbutanoate (2,3-dihydroxyisovalerate) into 2-oxo-3-methylbutanoate (2-oxoisovalerate), the penultimate precursor to L-isoleucine and L-valine, respectively. The chain is Dihydroxy-acid dehydratase from Ectopseudomonas mendocina (strain ymp) (Pseudomonas mendocina).